The chain runs to 871 residues: Protein arg-6, mitochondrial (871 aa).

The N-terminal 44 residues, 1–44, are a transit peptide targeting the mitochondrion; sequence MYSACAVALRAGARRVVRRVPKSARALPRAAAARRQISTTAARS. Residues 336–488 enclose the N-acetyltransferase domain; sequence QASTSLSEFK…DFTENGRAML (153 aa). Residue cysteine 689 is part of the active site.

The protein in the N-terminal section; belongs to the acetylglutamate kinase family. This sequence in the C-terminal section; belongs to the NAGSA dehydrogenase family. The protein precursor is cleaved into the two biologically active enzymes, the kinase and the reductase.

Its subcellular location is the mitochondrion. It catalyses the reaction N-acetyl-L-glutamate 5-semialdehyde + phosphate + NADP(+) = N-acetyl-L-glutamyl 5-phosphate + NADPH + H(+). The enzyme catalyses N-acetyl-L-glutamate + ATP = N-acetyl-L-glutamyl 5-phosphate + ADP. It participates in amino-acid biosynthesis; L-arginine biosynthesis; N(2)-acetyl-L-ornithine from L-glutamate: step 2/4. It functions in the pathway amino-acid biosynthesis; L-arginine biosynthesis; N(2)-acetyl-L-ornithine from L-glutamate: step 3/4. The chain is Protein arg-6, mitochondrial (arg-6) from Neurospora crassa (strain ATCC 24698 / 74-OR23-1A / CBS 708.71 / DSM 1257 / FGSC 987).